The following is a 107-amino-acid chain: Nucleoid-associated protein RF_1365 (107 aa).

Belongs to the YbaB/EbfC family. Homodimer.

Its subcellular location is the cytoplasm. It localises to the nucleoid. Functionally, binds to DNA and alters its conformation. May be involved in regulation of gene expression, nucleoid organization and DNA protection. The polypeptide is Nucleoid-associated protein RF_1365 (Rickettsia felis (strain ATCC VR-1525 / URRWXCal2) (Rickettsia azadi)).